The primary structure comprises 285 residues: NAD kinase (285 aa).

The active-site Proton acceptor is Asp-64. NAD(+) is bound by residues 64–65 (DG), 140–141 (ND), Arg-151, Arg-168, Asp-170, and 181–186 (TGYNLS).

Belongs to the NAD kinase family. It depends on a divalent metal cation as a cofactor.

Its subcellular location is the cytoplasm. The catalysed reaction is NAD(+) + ATP = ADP + NADP(+) + H(+). Involved in the regulation of the intracellular balance of NAD and NADP, and is a key enzyme in the biosynthesis of NADP. Catalyzes specifically the phosphorylation on 2'-hydroxyl of the adenosine moiety of NAD to yield NADP. In Lachnoclostridium phytofermentans (strain ATCC 700394 / DSM 18823 / ISDg) (Clostridium phytofermentans), this protein is NAD kinase.